Consider the following 62-residue polypeptide: Large ribosomal subunit protein bL28 (62 aa).

Residues 1-28 (MARVCAITGRKARSGNSRSHAMNATKRK) are disordered.

The protein belongs to the bacterial ribosomal protein bL28 family.

This Bacillus thuringiensis (strain Al Hakam) protein is Large ribosomal subunit protein bL28.